The chain runs to 79 residues: Acyl carrier protein (79 aa).

The Carrier domain occupies 2 to 77 (ENIEQRVKKI…QAIDYVTAHL (76 aa)). Residue Ser37 is modified to O-(pantetheine 4'-phosphoryl)serine.

Belongs to the acyl carrier protein (ACP) family. Post-translationally, 4'-phosphopantetheine is transferred from CoA to a specific serine of apo-ACP by AcpS. This modification is essential for activity because fatty acids are bound in thioester linkage to the sulfhydryl of the prosthetic group.

The protein resides in the cytoplasm. It functions in the pathway lipid metabolism; fatty acid biosynthesis. Its function is as follows. Carrier of the growing fatty acid chain in fatty acid biosynthesis. The protein is Acyl carrier protein of Laribacter hongkongensis (strain HLHK9).